Reading from the N-terminus, the 448-residue chain is MVASIRSGVLTLLHTACGAGILAMPYAFKPFGLIPGVIMIVLCGACAMQSLFIQARVAKYVPQGRASFSALTRLINPNLGIVFDLAIAIKCFGVGVSYMIVVGDLMPQIMSVWTRNAWLLNRNVQISLIMLFFVAPLSFLKKLNSLRYASMVAISSVAYLCVLVLLHYVAPSDEILRLKGRISYLLPPQSHDLNVLNTLPIFVFAYTCHHNMFSIINEQRSSRFEHVMKIPLIAISLALILYIAIGCAGYLTFGDNIIGNIIMLYPQAVSSTIGRIAIVLLVMLAFPLQCHPARASIHQILQHFAEENVSISATSADEPTVATESSPLIRDSSLDLNEVIEEESIYQPKETPLRGKSFIVITCSILVASYLVAISVSSLARVLAIVGATGSTSISFILPGLFGYKLIGTEHKTAVPLTTKIFKYTGLLLFIWGLIIMITCLTAALKLN.

At 1–7 (MVASIRS) the chain is on the cytoplasmic side. A helical membrane pass occupies residues 8–28 (GVLTLLHTACGAGILAMPYAF). The Vacuolar portion of the chain corresponds to 29–32 (KPFG). The helical transmembrane segment at 33–53 (LIPGVIMIVLCGACAMQSLFI) threads the bilayer. The Cytoplasmic segment spans residues 54-80 (QARVAKYVPQGRASFSALTRLINPNLG). Residues 81-101 (IVFDLAIAIKCFGVGVSYMIV) traverse the membrane as a helical segment. Residues 102-125 (VGDLMPQIMSVWTRNAWLLNRNVQ) are Vacuolar-facing. A helical transmembrane segment spans residues 126–146 (ISLIMLFFVAPLSFLKKLNSL). At 147 to 150 (RYAS) the chain is on the cytoplasmic side. A helical membrane pass occupies residues 151–171 (MVAISSVAYLCVLVLLHYVAP). At 172–195 (SDEILRLKGRISYLLPPQSHDLNV) the chain is on the vacuolar side. A helical membrane pass occupies residues 196 to 216 (LNTLPIFVFAYTCHHNMFSII). Residues 217-229 (NEQRSSRFEHVMK) lie on the Cytoplasmic side of the membrane. A helical transmembrane segment spans residues 230–250 (IPLIAISLALILYIAIGCAGY). Residues 251–267 (LTFGDNIIGNIIMLYPQ) lie on the Vacuolar side of the membrane. A helical membrane pass occupies residues 268–288 (AVSSTIGRIAIVLLVMLAFPL). Residues 289–357 (QCHPARASIH…PKETPLRGKS (69 aa)) are Cytoplasmic-facing. At Ser344 the chain carries Phosphoserine. The helical transmembrane segment at 358-378 (FIVITCSILVASYLVAISVSS) threads the bilayer. Residues 379 to 381 (LAR) are Vacuolar-facing. Residues 382–402 (VLAIVGATGSTSISFILPGLF) traverse the membrane as a helical segment. Residues 403-424 (GYKLIGTEHKTAVPLTTKIFKY) lie on the Cytoplasmic side of the membrane. Residues 425–445 (TGLLLFIWGLIIMITCLTAAL) form a helical membrane-spanning segment. At 446 to 448 (KLN) the chain is on the vacuolar side.

This sequence belongs to the amino acid/polyamine transporter 2 family.

The protein resides in the vacuole membrane. Its function is as follows. Involved in amino acid efflux from the vacuole to the cytoplasm. Capable of transporting aspartate and glutamate. Requires ATP for function. The protein is Vacuolar amino acid transporter 6 (AVT6) of Saccharomyces cerevisiae (strain ATCC 204508 / S288c) (Baker's yeast).